We begin with the raw amino-acid sequence, 177 residues long: O-acetyl-ADP-ribose deacetylase (177 aa).

Positions 1 to 175 (MKTRIHVVQG…LYERLLTQQG (175 aa)) constitute a Macro domain. Substrate-binding positions include 11-12 (DI), asparagine 25, 33-35 (GVD), and 122-126 (STGVY). Aspartate 35 serves as the catalytic Proton acceptor.

This sequence belongs to the MacroD-type family. YmdB subfamily. As to quaternary structure, homodimer. Interacts with RNase III.

It catalyses the reaction 3''-O-acetyl-ADP-D-ribose + H2O = ADP-D-ribose + acetate + H(+). It carries out the reaction 2''-O-acetyl-ADP-D-ribose + H2O = ADP-D-ribose + acetate + H(+). In terms of biological role, deacetylates O-acetyl-ADP ribose to yield ADP-ribose and free acetate. Down-regulates ribonuclease 3 (RNase III) activity. Acts by interacting directly with the region of the ribonuclease that is required for dimerization/activation. The protein is O-acetyl-ADP-ribose deacetylase of Shigella dysenteriae serotype 1 (strain Sd197).